We begin with the raw amino-acid sequence, 385 residues long: 8-amino-7-oxononanoate synthase (385 aa).

Residue Arg-23 coordinates substrate. 110–111 (GF) serves as a coordination point for pyridoxal 5'-phosphate. Residue His-135 participates in substrate binding. Pyridoxal 5'-phosphate is bound by residues Ser-180, His-208, and Thr-234. An N6-(pyridoxal phosphate)lysine modification is found at Lys-237. Position 350 (Thr-350) interacts with substrate.

Belongs to the class-II pyridoxal-phosphate-dependent aminotransferase family. BioF subfamily. Homodimer. Pyridoxal 5'-phosphate is required as a cofactor.

It carries out the reaction 6-carboxyhexanoyl-[ACP] + L-alanine + H(+) = (8S)-8-amino-7-oxononanoate + holo-[ACP] + CO2. The protein operates within cofactor biosynthesis; biotin biosynthesis. In terms of biological role, catalyzes the decarboxylative condensation of pimeloyl-[acyl-carrier protein] and L-alanine to produce 8-amino-7-oxononanoate (AON), [acyl-carrier protein], and carbon dioxide. This Vibrio vulnificus (strain CMCP6) protein is 8-amino-7-oxononanoate synthase.